The following is a 275-amino-acid chain: Diaminopimelate epimerase (275 aa).

Positions 13, 46, and 66 each coordinate substrate. The Proton donor role is filled by Cys75. Substrate-binding positions include 76-77 (GN), Asn159, Asn192, and 210-211 (ER). Catalysis depends on Cys219, which acts as the Proton acceptor. 220 to 221 (GT) is a binding site for substrate.

The protein belongs to the diaminopimelate epimerase family. In terms of assembly, homodimer.

The protein localises to the cytoplasm. The catalysed reaction is (2S,6S)-2,6-diaminopimelate = meso-2,6-diaminopimelate. Its pathway is amino-acid biosynthesis; L-lysine biosynthesis via DAP pathway; DL-2,6-diaminopimelate from LL-2,6-diaminopimelate: step 1/1. Functionally, catalyzes the stereoinversion of LL-2,6-diaminopimelate (L,L-DAP) to meso-diaminopimelate (meso-DAP), a precursor of L-lysine and an essential component of the bacterial peptidoglycan. The protein is Diaminopimelate epimerase of Psychromonas ingrahamii (strain DSM 17664 / CCUG 51855 / 37).